The sequence spans 346 residues: tRNA N6-adenosine threonylcarbamoyltransferase (346 aa).

Residues histidine 111 and histidine 115 each contribute to the Fe cation site. Substrate is bound by residues 134-138, aspartate 167, glycine 180, and asparagine 279; that span reads LVSGG. Position 307 (aspartate 307) interacts with Fe cation.

It belongs to the KAE1 / TsaD family. Requires Fe(2+) as cofactor.

It is found in the cytoplasm. It catalyses the reaction L-threonylcarbamoyladenylate + adenosine(37) in tRNA = N(6)-L-threonylcarbamoyladenosine(37) in tRNA + AMP + H(+). Required for the formation of a threonylcarbamoyl group on adenosine at position 37 (t(6)A37) in tRNAs that read codons beginning with adenine. Is involved in the transfer of the threonylcarbamoyl moiety of threonylcarbamoyl-AMP (TC-AMP) to the N6 group of A37, together with TsaE and TsaB. TsaD likely plays a direct catalytic role in this reaction. This chain is tRNA N6-adenosine threonylcarbamoyltransferase, found in Burkholderia cenocepacia (strain ATCC BAA-245 / DSM 16553 / LMG 16656 / NCTC 13227 / J2315 / CF5610) (Burkholderia cepacia (strain J2315)).